Consider the following 33-residue polypeptide: Helofensin-1 (33 aa).

The protein belongs to the beta-defensin family. Helofensin subfamily. Expressed by the venom gland.

It localises to the secreted. Functionally, lethal toxin which possesses an inhibitory effect on direct electrical stimulation of the isolated hemi-diaphragm. Neither hemorrhagic nor hemolytic activities are detected. Phospholipase A2 activity, proteolytic activity and arginine esterolytic activity are absent. The protein is Helofensin-1 of Heloderma horridum horridum (Mexican beaded lizard).